Consider the following 203-residue polypeptide: Enterotoxin-like toxin X (203 aa).

This sequence belongs to the staphylococcal/streptococcal toxin family.

It is found in the secreted. Functionally, plays a role in the inhibition of the host innate immune system. Inhibits phagocytosis and killing by human neutrophils by interacting with multiple neutrophil surface glycoproteins in a sialic acid-dependent manner. This chain is Enterotoxin-like toxin X, found in Staphylococcus aureus (strain NCTC 8325 / PS 47).